A 521-amino-acid polypeptide reads, in one-letter code: Protein disulfide-isomerase A5 (521 aa).

The signal sequence occupies residues 1-25; sequence MARVVPAWLLLPLAVWVVLPTWLSS. Thioredoxin domains lie at 136–263, 274–386, and 387–508; these read FLKD…NPQP, ADEG…NPES, and PPPP…TLRE. Cystine bridges form between cysteine 184–cysteine 187, cysteine 307–cysteine 310, and cysteine 428–cysteine 431. The short motif at 518–521 is the Prevents secretion from ER element; that stretch reads KEEL.

The protein belongs to the protein disulfide isomerase family.

It is found in the endoplasmic reticulum lumen. The catalysed reaction is Catalyzes the rearrangement of -S-S- bonds in proteins.. The protein is Protein disulfide-isomerase A5 (PDIA5) of Bos taurus (Bovine).